The sequence spans 606 residues: Prostaglandin G/H synthase 1 (606 aa).

The N-terminal stretch at 1 to 30 (MSRSSPSLRLPVLLLLLLLLLLPPPPPVLP) is a signal peptide. The region spanning 38-76 (PVNPCCYFPCQHQGVCVRVALDRYQCDCTRTGYSGPNCT) is the EGF-like domain. Disulfide bonds link Cys-42–Cys-53, Cys-43–Cys-165, Cys-47–Cys-63, and Cys-65–Cys-75. 3 N-linked (GlcNAc...) asparagine glycosylation sites follow: Asn-74, Asn-110, and Asn-150. His-213 acts as the Proton acceptor in catalysis. The active-site For cyclooxygenase activity is Tyr-391. Position 394 (His-394) interacts with heme b. Asn-416 carries N-linked (GlcNAc...) asparagine glycosylation. Cys-575 and Cys-581 are disulfide-bonded.

Belongs to the prostaglandin G/H synthase family. In terms of assembly, homodimer. Heme b serves as cofactor.

The protein localises to the microsome membrane. It is found in the endoplasmic reticulum membrane. The enzyme catalyses (5Z,8Z,11Z,14Z)-eicosatetraenoate + AH2 + 2 O2 = prostaglandin H2 + A + H2O. The catalysed reaction is (5Z,8Z,11Z,14Z)-eicosatetraenoate + 2 O2 = prostaglandin G2. It carries out the reaction prostaglandin G2 + AH2 = prostaglandin H2 + A + H2O. It catalyses the reaction (9Z,12Z)-octadecadienoate + AH2 + O2 = (9R)-hydroxy-(10E,12Z)-octadecadienoate + A + H2O. The enzyme catalyses (9Z,12Z)-octadecadienoate + AH2 + O2 = (9S)-hydroxy-(10E,12Z)-octadecadienoate + A + H2O. The catalysed reaction is (9Z,12Z)-octadecadienoate + AH2 + O2 = (13S)-hydroxy-(9Z,11E)-octadecadienoate + A + H2O. It carries out the reaction (9Z,12Z)-octadecadienoate + AH2 + O2 = (13R)-hydroxy-(9Z,11E)-octadecadienoate + A + H2O. It functions in the pathway lipid metabolism; prostaglandin biosynthesis. The cyclooxygenase activity is inhibited by nonsteroidal anti-inflammatory drugs (NSAIDs) including ibuprofen, flurbiprofen, ketoprofen, naproxen, flurbiprofen, anirolac, fenclofenac and diclofenac. Its function is as follows. Dual cyclooxygenase and peroxidase that plays an important role in the biosynthesis pathway of prostanoids, a class of C20 oxylipins mainly derived from arachidonate ((5Z,8Z,11Z,14Z)-eicosatetraenoate, AA, C20:4(n-6)), with a particular role in the inflammatory response. The cyclooxygenase activity oxygenates AA to the hydroperoxy endoperoxide prostaglandin G2 (PGG2), and the peroxidase activity reduces PGG2 to the hydroxy endoperoxide prostaglandin H2 (PGH2), the precursor of all 2-series prostaglandins and thromboxanes. This complex transformation is initiated by abstraction of hydrogen at carbon 13 (with S-stereochemistry), followed by insertion of molecular O2 to form the endoperoxide bridge between carbon 9 and 11 that defines prostaglandins. The insertion of a second molecule of O2 (bis-oxygenase activity) yields a hydroperoxy group in PGG2 that is then reduced to PGH2 by two electrons. Involved in the constitutive production of prostanoids in particular in the stomach and platelets. In gastric epithelial cells, it is a key step in the generation of prostaglandins, such as prostaglandin E2 (PGE2), which plays an important role in cytoprotection. In platelets, it is involved in the generation of thromboxane A2 (TXA2), which promotes platelet activation and aggregation, vasoconstriction and proliferation of vascular smooth muscle cells. Can also use linoleate (LA, (9Z,12Z)-octadecadienoate, C18:2(n-6)) as substrate and produce hydroxyoctadecadienoates (HODEs) in a regio- and stereospecific manner, being (9R)-HODE ((9R)-hydroxy-(10E,12Z)-octadecadienoate) and (13S)-HODE ((13S)-hydroxy-(9Z,11E)-octadecadienoate) its major products. The chain is Prostaglandin G/H synthase 1 (PTGS1) from Oryctolagus cuniculus (Rabbit).